Consider the following 601-residue polypeptide: Translation initiation factor IF-2 (601 aa).

The disordered stretch occupies residues 54-101 (GHTASAEPAPAQASGSPASPAQTEAQEAPQPTATATAEREPAAPPARE). Residues 57 to 89 (ASAEPAPAQASGSPASPAQTEAQEAPQPTATAT) show a composition bias toward low complexity. In terms of domain architecture, tr-type G spans 104-273 (HRAPVVTIMG…SLTAELEDLR (170 aa)). Residues 113–120 (GHVDHGKT) form a G1 region. 113 to 120 (GHVDHGKT) lines the GTP pocket. The tract at residues 138 to 142 (GITQH) is G2. Residues 159–162 (DTPG) are G3. Residues 159 to 163 (DTPGH) and 213 to 216 (NKVD) contribute to the GTP site. The interval 213–216 (NKVD) is G4. The tract at residues 249-251 (SAK) is G5.

Belongs to the TRAFAC class translation factor GTPase superfamily. Classic translation factor GTPase family. IF-2 subfamily.

Its subcellular location is the cytoplasm. In terms of biological role, one of the essential components for the initiation of protein synthesis. Protects formylmethionyl-tRNA from spontaneous hydrolysis and promotes its binding to the 30S ribosomal subunits. Also involved in the hydrolysis of GTP during the formation of the 70S ribosomal complex. This chain is Translation initiation factor IF-2, found in Deinococcus geothermalis (strain DSM 11300 / CIP 105573 / AG-3a).